The following is a 248-amino-acid chain: Triosephosphate isomerase (248 aa).

Asn10 and Lys12 together coordinate substrate. Residue His95 is the Electrophile of the active site. The active-site Proton acceptor is the Glu165.

Belongs to the triosephosphate isomerase family. Homodimer.

The catalysed reaction is D-glyceraldehyde 3-phosphate = dihydroxyacetone phosphate. It participates in carbohydrate biosynthesis; gluconeogenesis. It functions in the pathway carbohydrate degradation; glycolysis; D-glyceraldehyde 3-phosphate from glycerone phosphate: step 1/1. The chain is Triosephosphate isomerase (TPI1) from Debaryomyces hansenii (strain ATCC 36239 / CBS 767 / BCRC 21394 / JCM 1990 / NBRC 0083 / IGC 2968) (Yeast).